The chain runs to 207 residues: Large ribosomal subunit protein uL4 (207 aa).

The tract at residues Thr-48–Ile-78 is disordered. Positions Gly-60–Gly-71 are enriched in basic residues.

The protein belongs to the universal ribosomal protein uL4 family. Part of the 50S ribosomal subunit.

Functionally, one of the primary rRNA binding proteins, this protein initially binds near the 5'-end of the 23S rRNA. It is important during the early stages of 50S assembly. It makes multiple contacts with different domains of the 23S rRNA in the assembled 50S subunit and ribosome. In terms of biological role, forms part of the polypeptide exit tunnel. In Bacillus pumilus (strain SAFR-032), this protein is Large ribosomal subunit protein uL4.